The following is a 197-amino-acid chain: Zinc finger protein 581 (197 aa).

Residues 1 to 10 show a composition bias toward pro residues; the sequence is MLVLPSPCPQ. Residues 1 to 52 form a disordered region; the sequence is MLVLPSPCPQPLAFSSVETMEGPPRRTCRSPEPGPSSSIGSPQASSPPRPNH. Over residues 35-44 the composition is skewed to low complexity; that stretch reads PSSSIGSPQA. 4 consecutive C2H2-type zinc fingers follow at residues 87 to 109, 115 to 137, 145 to 167, and 173 to 196; these read YSCP…SITH, FECD…HSIH, HGCP…SRVH, and FQCP…RWKH.

It localises to the nucleus. May be involved in transcriptional regulation. This is Zinc finger protein 581 (ZNF581) from Homo sapiens (Human).